A 116-amino-acid chain; its full sequence is NADH-ubiquinone oxidoreductase chain 3 (116 aa).

A run of 3 helical transmembrane segments spans residues Leu3 to Phe23, Phe56 to Leu76, and Pro85 to Tyr105.

The protein belongs to the complex I subunit 3 family.

The protein localises to the mitochondrion membrane. The catalysed reaction is a ubiquinone + NADH + 5 H(+)(in) = a ubiquinol + NAD(+) + 4 H(+)(out). Core subunit of the mitochondrial membrane respiratory chain NADH dehydrogenase (Complex I) that is believed to belong to the minimal assembly required for catalysis. Complex I functions in the transfer of electrons from NADH to the respiratory chain. The immediate electron acceptor for the enzyme is believed to be ubiquinone. The protein is NADH-ubiquinone oxidoreductase chain 3 (MT-ND3) of Paralichthys olivaceus (Bastard halibut).